The following is a 66-amino-acid chain: uncharacterized protein (66 aa).

The chain crosses the membrane as a helical span at residues 11-31 (PFPLLGVWIIVIIIVAVIGLL).

It is found in the membrane. This is an uncharacterized protein from Chenopodium amaranticolor (Quinoa).